The chain runs to 137 residues: Holo-[acyl-carrier-protein] synthase (137 aa).

Residues aspartate 8 and glutamate 61 each coordinate Mg(2+).

The protein belongs to the P-Pant transferase superfamily. AcpS family. Requires Mg(2+) as cofactor.

It is found in the cytoplasm. The catalysed reaction is apo-[ACP] + CoA = holo-[ACP] + adenosine 3',5'-bisphosphate + H(+). Transfers the 4'-phosphopantetheine moiety from coenzyme A to a Ser of acyl-carrier-protein. The sequence is that of Holo-[acyl-carrier-protein] synthase from Afipia carboxidovorans (strain ATCC 49405 / DSM 1227 / KCTC 32145 / OM5) (Oligotropha carboxidovorans).